The following is a 78-amino-acid chain: Large ribosomal subunit protein uL29 (78 aa).

The interval 59 to 78 (VESERKRGKSLSSTQTQKEE) is disordered. Residues 68–78 (SLSSTQTQKEE) are compositionally biased toward polar residues.

The protein belongs to the universal ribosomal protein uL29 family.

The chain is Large ribosomal subunit protein uL29 from Synechococcus sp. (strain JA-3-3Ab) (Cyanobacteria bacterium Yellowstone A-Prime).